We begin with the raw amino-acid sequence, 245 residues long: CMRF35-like molecule 3 (245 aa).

The N-terminal stretch at 1–18 (MWQFPALLFLFLPGCCTA) is a signal peptide. Positions 19 to 124 (QDPVTGPEEV…TDPMFKVNVN (106 aa)) constitute an Ig-like V-type domain. Over 19-189 (QDPVTGPEEV…FIWSLLSSIS (171 aa)) the chain is Extracellular. Cys40 and Cys108 are joined by a disulfide. Important for maintaining surface expression and for interaction with FCER1G regions lie at residues 177-182 (NSLFIW) and 189-198 (SFLLMVFVVV). The chain crosses the membrane as a helical span at residues 190–210 (FLLMVFVVVPLLLSMLSAVLW). The Cytoplasmic segment spans residues 211 to 245 (VNRPQRHYGGGEIGLVETHRSDALDGEKHFPGDEK).

It belongs to the CD300 family. In terms of assembly, interacts with FCER1G; the interaction may be indirect. Interacts with TLR9. In terms of tissue distribution, highly expressed in bone marrow-derived mast cells and macrophages, peripheral blood monocytes and CD11c+ cells, with weaker expression detected in CD11b cells in bone marrow and peripheral blood. Not detected in B220+ cells in bone marrow or spleen, in Thy-1.2+ or CD3+ cells in peripheral blood, spleen or thymus, or in NK1.1+ cells in spleen (at protein level). Widely expressed in various tissues including heart, liver, spleen, lung, kidney, brain, bone marrow, thymus, axillary lymph node and mesenteric lymph node. Highly expressed in macrophage cell lines J774.1 and RAW 264.7 and in mast cell line MC/9. Weak expression detected in B-lineage cell lines WEHI-231 and A20 and in dendritic cell line DC2.4. Not detected in other myeloid cell lines or T-lineage cell lines.

The protein localises to the cell membrane. It is found in the early endosome. The protein resides in the lysosome. Functionally, acts as an activating receptor inducing cytokine production in mast cells. Can act as a positive regulator of TLR9 signaling in macrophages, leading to enhanced production of pro-inflammatory cytokines. This Mus musculus (Mouse) protein is CMRF35-like molecule 3.